The chain runs to 738 residues: Phosphoribosylformylglycinamidine synthase subunit PurL (738 aa).

His-41 is a catalytic residue. ATP-binding residues include Tyr-44 and Lys-83. Glu-85 contributes to the Mg(2+) binding site. Substrate is bound by residues 86–89 (SHNH) and Arg-108. Residue His-87 is the Proton acceptor of the active site. Residue Asp-109 participates in Mg(2+) binding. Gln-233 serves as a coordination point for substrate. Asp-261 contributes to the Mg(2+) binding site. Residue 305–307 (ESQ) participates in substrate binding. 2 residues coordinate ATP: Asp-490 and Gly-527. Residue Asn-528 coordinates Mg(2+). Ser-530 is a substrate binding site.

This sequence belongs to the FGAMS family. Monomer. Part of the FGAM synthase complex composed of 1 PurL, 1 PurQ and 2 PurS subunits.

The protein resides in the cytoplasm. The catalysed reaction is N(2)-formyl-N(1)-(5-phospho-beta-D-ribosyl)glycinamide + L-glutamine + ATP + H2O = 2-formamido-N(1)-(5-O-phospho-beta-D-ribosyl)acetamidine + L-glutamate + ADP + phosphate + H(+). The protein operates within purine metabolism; IMP biosynthesis via de novo pathway; 5-amino-1-(5-phospho-D-ribosyl)imidazole from N(2)-formyl-N(1)-(5-phospho-D-ribosyl)glycinamide: step 1/2. Part of the phosphoribosylformylglycinamidine synthase complex involved in the purines biosynthetic pathway. Catalyzes the ATP-dependent conversion of formylglycinamide ribonucleotide (FGAR) and glutamine to yield formylglycinamidine ribonucleotide (FGAM) and glutamate. The FGAM synthase complex is composed of three subunits. PurQ produces an ammonia molecule by converting glutamine to glutamate. PurL transfers the ammonia molecule to FGAR to form FGAM in an ATP-dependent manner. PurS interacts with PurQ and PurL and is thought to assist in the transfer of the ammonia molecule from PurQ to PurL. This is Phosphoribosylformylglycinamidine synthase subunit PurL from Alkaliphilus metalliredigens (strain QYMF).